Reading from the N-terminus, the 382-residue chain is 1-deoxy-D-xylulose 5-phosphate reductoisomerase (382 aa).

The NADPH site is built by Ser10, Gly11, Ser12, Ile13, Gly36, Lys37, Asn38, and Asn121. Lys122 is a 1-deoxy-D-xylulose 5-phosphate binding site. An NADPH-binding site is contributed by Glu123. Asp147 contributes to the Mn(2+) binding site. Positions 148, 149, 173, and 196 each coordinate 1-deoxy-D-xylulose 5-phosphate. Residue Glu149 coordinates Mn(2+). Gly202 is a binding site for NADPH. 1-deoxy-D-xylulose 5-phosphate-binding residues include Ser209, Asn214, Lys215, and Glu218. Glu218 contributes to the Mn(2+) binding site.

The protein belongs to the DXR family. Mg(2+) serves as cofactor. Requires Mn(2+) as cofactor.

It catalyses the reaction 2-C-methyl-D-erythritol 4-phosphate + NADP(+) = 1-deoxy-D-xylulose 5-phosphate + NADPH + H(+). It functions in the pathway isoprenoid biosynthesis; isopentenyl diphosphate biosynthesis via DXP pathway; isopentenyl diphosphate from 1-deoxy-D-xylulose 5-phosphate: step 1/6. Its function is as follows. Catalyzes the NADPH-dependent rearrangement and reduction of 1-deoxy-D-xylulose-5-phosphate (DXP) to 2-C-methyl-D-erythritol 4-phosphate (MEP). The chain is 1-deoxy-D-xylulose 5-phosphate reductoisomerase from Geobacillus kaustophilus (strain HTA426).